A 139-amino-acid chain; its full sequence is MTRVVATGTFDILHPGHVLYLSEAGKLGDELYVIVARDSTIKHKRKPLVPENQRLFMVRALKCVDHAMLGSEDDMFKPIREIDPDIITIGFNQHWDEEALQRQLIERGLKAKVVRITKCDTAPYASSRHIREKIKESDC.

ATP is bound by residues 9–10 (TF), 14–17 (HPGH), and N92.

Belongs to the archaeal FAD synthase family. Homodimer. Requires a divalent metal cation as cofactor.

It catalyses the reaction FMN + ATP + H(+) = FAD + diphosphate. It functions in the pathway cofactor biosynthesis; FAD biosynthesis; FAD from FMN: step 1/1. Its function is as follows. Catalyzes the transfer of the AMP portion of ATP to flavin mononucleotide (FMN) to produce flavin adenine dinucleotide (FAD) coenzyme. This is FAD synthase from Methanocella paludicola (strain DSM 17711 / JCM 13418 / NBRC 101707 / SANAE).